The following is a 93-amino-acid chain: UPF0175 protein AF_0100 (93 aa).

Belongs to the UPF0175 family.

In Archaeoglobus fulgidus (strain ATCC 49558 / DSM 4304 / JCM 9628 / NBRC 100126 / VC-16), this protein is UPF0175 protein AF_0100.